The chain runs to 466 residues: Coproporphyrinogen III oxidase (466 aa).

FAD-binding positions include 9–14, 34–35, Lys-42, 56–59, Val-254, and 446–448; these read GAGITG, EA, GPES, and VGL.

Belongs to the protoporphyrinogen/coproporphyrinogen oxidase family. Coproporphyrinogen III oxidase subfamily. FAD is required as a cofactor.

Its subcellular location is the cytoplasm. It catalyses the reaction coproporphyrinogen III + 3 O2 = coproporphyrin III + 3 H2O2. It participates in porphyrin-containing compound metabolism; protoheme biosynthesis. Its activity is regulated as follows. The generation of protoporphyrin IX, but not coproporphyrin III, is stimulated by heme-bound HemQ. This stimulatory effect is mediated by superoxide. Inhibited by acifluorfen analogs. Functionally, involved in coproporphyrin-dependent heme b biosynthesis. Catalyzes the oxidation of coproporphyrinogen III to coproporphyrin III. Can also oxidize protoporphyrinogen IX. This is Coproporphyrinogen III oxidase from Staphylococcus aureus (strain NCTC 8325 / PS 47).